Consider the following 203-residue polypeptide: NAD(P)H dehydrogenase (quinone) (203 aa).

In terms of domain architecture, Flavodoxin-like spans 7–194; the sequence is VLVLYHSSYG…SLARKQGAHV (188 aa). Residues 13–18 and 82–84 contribute to the FMN site; these read SSYGHI and TRF. Tyr-15 contacts NAD(+). A substrate-binding site is contributed by Trp-102. Residues 117-122 and His-137 contribute to the FMN site; that span reads STGTGG.

It belongs to the WrbA family. Requires FMN as cofactor.

It carries out the reaction a quinone + NADH + H(+) = a quinol + NAD(+). It catalyses the reaction a quinone + NADPH + H(+) = a quinol + NADP(+). The polypeptide is NAD(P)H dehydrogenase (quinone) (Parvibaculum lavamentivorans (strain DS-1 / DSM 13023 / NCIMB 13966)).